The primary structure comprises 200 residues: 3-isopropylmalate dehydratase small subunit (200 aa).

The protein belongs to the LeuD family. LeuD type 1 subfamily. As to quaternary structure, heterodimer of LeuC and LeuD.

It catalyses the reaction (2R,3S)-3-isopropylmalate = (2S)-2-isopropylmalate. Its pathway is amino-acid biosynthesis; L-leucine biosynthesis; L-leucine from 3-methyl-2-oxobutanoate: step 2/4. Functionally, catalyzes the isomerization between 2-isopropylmalate and 3-isopropylmalate, via the formation of 2-isopropylmaleate. The protein is 3-isopropylmalate dehydratase small subunit of Actinobacillus pleuropneumoniae serotype 5b (strain L20).